Reading from the N-terminus, the 279-residue chain is HTH-type transcriptional regulator HdfR (279 aa).

The HTH lysR-type domain occupies 1 to 58; it reads MDTELLKTFLEVSRTRHFGRAAESLYLTQSAVSFRIRQLENQLGVNLFTRHRNNIRLT. Residues 18–37 constitute a DNA-binding region (H-T-H motif); the sequence is FGRAAESLYLTQSAVSFRIR.

The protein belongs to the LysR transcriptional regulatory family.

Functionally, negatively regulates the transcription of the flagellar master operon flhDC by binding to the upstream region of the operon. In Escherichia coli O17:K52:H18 (strain UMN026 / ExPEC), this protein is HTH-type transcriptional regulator HdfR.